Here is a 463-residue protein sequence, read N- to C-terminus: uncharacterized protein (463 aa).

In terms of domain architecture, TRAM spans 12 to 70 (LWQQGSVVELTITGLNHQGEGIGRFNERVVFVPDTAPGDRLEVRLVKVKRNYALAQLLK). Residues Cys83, Cys89, Cys92, and Cys171 each coordinate [4Fe-4S] cluster. S-adenosyl-L-methionine contacts are provided by Gln295, Tyr324, Glu345, and Asp390. Cys417 (nucleophile) is an active-site residue.

It belongs to the class I-like SAM-binding methyltransferase superfamily. RNA M5U methyltransferase family.

This is an uncharacterized protein from Synechocystis sp. (strain ATCC 27184 / PCC 6803 / Kazusa).